Consider the following 258-residue polypeptide: Maintenance of carboxysome distribution protein A (258 aa).

ATP-binding residues include G11, G12, Q13, G14, K15, T16, T17, Q40, E147, K151, F182, R183, L216, E217, S218, and Y221. T16 serves as a coordination point for Mg(2+).

It belongs to the ParA family. McdA subfamily. In terms of assembly, homodimerizes in the presence of ATP, making extra nucleotide contacts than with ADP or AMP-PNP. Each subunit binds 1 ATP molecule; Glu-147, Lys-151 and Arg-183 cross the dimer interface to contact ATP in the other subunit, while Phe-182, Arg-183 and Tyr-221 stack with the adenine base in their own subunit. Forms a complex with McdB.

It localises to the cytoplasm. It is found in the nucleoid. The enzyme catalyses ATP + H2O = ADP + phosphate + H(+). McdA and McdB together mediate carboxysome (Cb) spacing, size, ultrastructure and probably inheritance in the cell, together they prevent Cb aggregation. McdA is an ATPase that forms dynamic gradients on the nucleoid in response to adapter protein McdB, which associates with carboxysomes. The interplay between McdA gradients on the nucleoid and McdB-bound carboxysomes result in the equal spacing of Cbs along the cell length. Binds DNA saturably and strongly in the presence of Mg(2+)ATP; without ATP, DNA-binding is very poor (tested with a mutant that should not be able to hydrolyze ATP, Asp-38-Ala). Decreasing the NaCl concentration increases DNA binding. In terms of biological role, incorrect positioning (aggregation) of carboxysomes results in reduced CO(2) fixation by encapsulated ribulose-1,5-bisphosphate carboxylase (RuBisCO, cbbL/cbbS), which leads to slower growth. This chain is Maintenance of carboxysome distribution protein A, found in Gloeothece citriformis (strain PCC 7424) (Cyanothece sp. (strain PCC 7424)).